The following is a 318-amino-acid chain: Mediator of RNA polymerase II transcription subunit 3 (318 aa).

Positions 134–156 (SAAGITKTSSGNDGNTTGSTANT) are enriched in polar residues. The interval 134 to 225 (SAAGITKTSS…PSLKQIPNTQ (92 aa)) is disordered. Low complexity predominate over residues 192-217 (HTGPATAPTTSNSAASAAAAAANTPS).

This sequence belongs to the Mediator complex subunit 3 family. In terms of assembly, component of the Mediator complex.

It localises to the nucleus. In terms of biological role, component of the Mediator complex, a coactivator involved in regulated gene transcription of nearly all RNA polymerase II-dependent genes. Mediator functions as a bridge to convey information from gene-specific regulatory proteins to the basal RNA polymerase II transcription machinery. Mediator is recruited to promoters by direct interactions with regulatory proteins and serves as a scaffold for the assembly of a functional preinitiation complex with RNA polymerase II and the general transcription factors. The chain is Mediator of RNA polymerase II transcription subunit 3 (PGD1) from Kluyveromyces lactis (strain ATCC 8585 / CBS 2359 / DSM 70799 / NBRC 1267 / NRRL Y-1140 / WM37) (Yeast).